A 622-amino-acid chain; its full sequence is Chaperone protein HtpG (622 aa).

The a; substrate-binding stretch occupies residues methionine 1 to arginine 322. The segment at glutamine 323–arginine 539 is b. A c region spans residues valine 540–alanine 622.

The protein belongs to the heat shock protein 90 family. In terms of assembly, homodimer.

The protein localises to the cytoplasm. Molecular chaperone. Has ATPase activity. The chain is Chaperone protein HtpG from Desulfotalea psychrophila (strain LSv54 / DSM 12343).